A 202-amino-acid chain; its full sequence is Small ribosomal subunit protein uS4c (202 aa).

One can recognise an S4 RNA-binding domain in the interval 90–153 (MRLDNIIFRL…KSETIISKNI (64 aa)).

The protein belongs to the universal ribosomal protein uS4 family. As to quaternary structure, part of the 30S ribosomal subunit. Contacts protein S5. The interaction surface between S4 and S5 is involved in control of translational fidelity.

Its subcellular location is the plastid. It is found in the chloroplast. Functionally, one of the primary rRNA binding proteins, it binds directly to 16S rRNA where it nucleates assembly of the body of the 30S subunit. In terms of biological role, with S5 and S12 plays an important role in translational accuracy. The polypeptide is Small ribosomal subunit protein uS4c (rps4) (Catharomnion ciliatum (Moss)).